A 209-amino-acid chain; its full sequence is Thiamine-phosphate synthase (209 aa).

4-amino-2-methyl-5-(diphosphooxymethyl)pyrimidine-binding positions include 38-42 (QLREK) and asparagine 70. Residues aspartate 71 and aspartate 90 each contribute to the Mg(2+) site. Serine 109 contacts 4-amino-2-methyl-5-(diphosphooxymethyl)pyrimidine. 135 to 137 (TPT) contributes to the 2-[(2R,5Z)-2-carboxy-4-methylthiazol-5(2H)-ylidene]ethyl phosphate binding site. Residue lysine 138 participates in 4-amino-2-methyl-5-(diphosphooxymethyl)pyrimidine binding. 2-[(2R,5Z)-2-carboxy-4-methylthiazol-5(2H)-ylidene]ethyl phosphate is bound by residues glycine 166 and 186–187 (IS).

The protein belongs to the thiamine-phosphate synthase family. It depends on Mg(2+) as a cofactor.

The enzyme catalyses 2-[(2R,5Z)-2-carboxy-4-methylthiazol-5(2H)-ylidene]ethyl phosphate + 4-amino-2-methyl-5-(diphosphooxymethyl)pyrimidine + 2 H(+) = thiamine phosphate + CO2 + diphosphate. It catalyses the reaction 2-(2-carboxy-4-methylthiazol-5-yl)ethyl phosphate + 4-amino-2-methyl-5-(diphosphooxymethyl)pyrimidine + 2 H(+) = thiamine phosphate + CO2 + diphosphate. The catalysed reaction is 4-methyl-5-(2-phosphooxyethyl)-thiazole + 4-amino-2-methyl-5-(diphosphooxymethyl)pyrimidine + H(+) = thiamine phosphate + diphosphate. It participates in cofactor biosynthesis; thiamine diphosphate biosynthesis; thiamine phosphate from 4-amino-2-methyl-5-diphosphomethylpyrimidine and 4-methyl-5-(2-phosphoethyl)-thiazole: step 1/1. Its function is as follows. Condenses 4-methyl-5-(beta-hydroxyethyl)thiazole monophosphate (THZ-P) and 2-methyl-4-amino-5-hydroxymethyl pyrimidine pyrophosphate (HMP-PP) to form thiamine monophosphate (TMP). This Syntrophomonas wolfei subsp. wolfei (strain DSM 2245B / Goettingen) protein is Thiamine-phosphate synthase.